The sequence spans 274 residues: Penicillin-insensitive murein endopeptidase (274 aa).

Positions 1 to 19 (MNKTAIALLALLASSASLA) are cleaved as a signal peptide. Intrachain disulfides connect cysteine 44-cysteine 265, cysteine 187-cysteine 235, and cysteine 216-cysteine 223. Histidine 110, histidine 113, aspartate 120, aspartate 147, histidine 150, and histidine 211 together coordinate Zn(2+). Residues 227–274 (PLPPPGDGCGAELQSWFEPPKPGTTKPEKKTPPPLPPSCQALLDEHVI) form a disordered region.

Belongs to the peptidase M74 family. Dimer. It depends on Zn(2+) as a cofactor.

It is found in the periplasm. Functionally, murein endopeptidase that cleaves the D-alanyl-meso-2,6-diamino-pimelyl amide bond that connects peptidoglycan strands. Likely plays a role in the removal of murein from the sacculus. The sequence is that of Penicillin-insensitive murein endopeptidase from Escherichia coli O1:K1 / APEC.